Reading from the N-terminus, the 464-residue chain is Gasdermin-A3 (464 aa).

The segment at Met1–Gly261 is triggers pyroptosis. Position 9 to 13 (Arg9 to Arg13) interacts with a cardiolipin. 4 beta stranded membrane passes run Asn78–Val95, Val99–Val120, Val164–Ser180, and Leu184–Ile198. Positions Glu255–Ala327 form a coiled coil.

This sequence belongs to the gasdermin family. Homooligomer; homooligomeric ring-shaped pore complex containing 18-36 subunits when inserted in the membrane. Post-translationally, cleavage relieves autoinhibition by releasing the N-terminal moiety (Gasdermin-A3, N-terminal) that initiates pyroptosis. In contrast to Gsdma, not cleaved by bacterial effector protein SpeB. Palmitoylated. As to expression, highest levels in skin with weak expression in placenta and testis. Not detected in the gastrointestinal tract. In skin, expressed in postnatal hair follicles and epidermis as well as sebaceous gland basal cells.

It localises to the cytoplasm. Its subcellular location is the cytosol. It is found in the cell membrane. The protein localises to the mitochondrion membrane. The full-length protein before cleavage is inactive: intramolecular interactions between N- and C-terminal domains mediate autoinhibition in the absence of activation signal. The intrinsic pyroptosis-inducing activity is carried by the released N-terminal moiety (Gasdermin-A3, N-terminal). In terms of biological role, precursor of a pore-forming protein involved in the transition from catagen to telogen at the end of hair follicle morphogenesis. This form constitutes the precursor of the pore: upon cleavage, the released N-terminal moiety (Gasdermin-A3, N-terminal) binds to membranes and forms pores, triggering pyroptosis. This form acts as a sensor of infection: activation is triggered by cleavage by some bacterial effector protein, which releases the N-terminal moiety (Gasdermin-A3, N-terminal). Functionally, pore-forming protein that causes membrane permeabilization and pyroptosis. Released upon cleavage by some bacterial effector protein, and binds to membrane inner leaflet lipids. Homooligomerizes within the membrane and forms pores of 10-15 nanometers (nm) of inner diameter, allowing the release of mature interleukin-1 (IL1B and IL18) and triggering pyroptosis. Binds to membrane inner leaflet lipids, including bisphosphorylated phosphatidylinositols, such as phosphatidylinositol (4,5)-bisphosphate, as well as phosphatidylinositol (3,4,5)-bisphosphate, and more weakly to monophosphorylated phosphatidylinositols. Also binds to bacterial and mitochondrial lipids, including cardiolipin, and exhibits bactericidal activity. Plays a role in the transition from catagen to telogen at the end of hair follicle morphogenesis, possibly by regulating hair follicle stem cell niche maintenance. Also required for mammary gland development. The sequence is that of Gasdermin-A3 from Mus musculus (Mouse).